The following is an 81-amino-acid chain: Short neurotoxin 1 (81 aa).

The N-terminal stretch at 1 to 21 (MKTLLLTLVVVTIVCLDLGYT) is a signal peptide. Intrachain disulfides connect Cys24–Cys43, Cys38–Cys60, Cys62–Cys73, and Cys74–Cys79.

Belongs to the three-finger toxin family. Short-chain subfamily. Type I alpha-neurotoxin sub-subfamily. In terms of tissue distribution, expressed by the venom gland.

The protein localises to the secreted. Its function is as follows. Binds to muscle nicotinic acetylcholine receptor (nAChR) and inhibit acetylcholine from binding to the receptor, thereby impairing neuromuscular transmission. This chain is Short neurotoxin 1, found in Austrelaps superbus (Lowland copperhead snake).